Consider the following 475-residue polypeptide: Ribulose bisphosphate carboxylase large chain (475 aa).

Positions M1–S2 are excised as a propeptide. P3 bears the N-acetylproline mark. The residue at position 14 (K14) is an N6,N6,N6-trimethyllysine. Substrate-binding residues include N123 and T173. K175 (proton acceptor) is an active-site residue. Substrate is bound at residue K177. Mg(2+) is bound by residues K201, D203, and E204. The residue at position 201 (K201) is an N6-carboxylysine. Catalysis depends on H294, which acts as the Proton acceptor. Positions 295, 327, and 379 each coordinate substrate.

The protein belongs to the RuBisCO large chain family. Type I subfamily. Heterohexadecamer of 8 large chains and 8 small chains. It depends on Mg(2+) as a cofactor.

It is found in the plastid. The protein localises to the chloroplast. The catalysed reaction is 2 (2R)-3-phosphoglycerate + 2 H(+) = D-ribulose 1,5-bisphosphate + CO2 + H2O. The enzyme catalyses D-ribulose 1,5-bisphosphate + O2 = 2-phosphoglycolate + (2R)-3-phosphoglycerate + 2 H(+). RuBisCO catalyzes two reactions: the carboxylation of D-ribulose 1,5-bisphosphate, the primary event in carbon dioxide fixation, as well as the oxidative fragmentation of the pentose substrate in the photorespiration process. Both reactions occur simultaneously and in competition at the same active site. In Coleochaete orbicularis (Charophycean green alga), this protein is Ribulose bisphosphate carboxylase large chain.